The following is a 293-amino-acid chain: MGPPSACPHRECIPWQGLLLTASLLTFWNAPTTAWLFIASAPFEVAEGENVHLSVVYLPENLYSYGWYKGKTVEPNQLIAAYVIDTHVRTPGPAYSGRETISPSGDLHFQNVTLEDTGYYNLQVTYRNSQIEQASHHLRVYESVAQPSIQASSTTVTEKGSVVLTCHTNNTGTSFQWIFNNQRLQVTKRMKLSWFNHVLTIDPIRQEDAGEYQCEVSNPVSSNRSDPLKLTVKSDDNTLGILIGVLVGSLLVAALVCFLLLRKTGRASDQSDFREQQPPASTPGHGPSDSSIS.

Positions 1–34 (MGPPSACPHRECIPWQGLLLTASLLTFWNAPTTA) are cleaved as a signal peptide. The Extracellular segment spans residues 35 to 240 (WLFIASAPFE…TVKSDDNTLG (206 aa)). Asn111 carries N-linked (GlcNAc...) asparagine glycosylation. The Ig-like C2-type domain occupies 147–231 (PSIQASSTTV…SNRSDPLKLT (85 aa)). Cys166 and Cys214 are joined by a disulfide. A helical membrane pass occupies residues 241-261 (ILIGVLVGSLLVAALVCFLLL). The Cytoplasmic segment spans residues 262-293 (RKTGRASDQSDFREQQPPASTPGHGPSDSSIS). Positions 267 to 293 (ASDQSDFREQQPPASTPGHGPSDSSIS) are disordered.

This sequence belongs to the immunoglobulin superfamily. CEA family.

It is found in the membrane. The protein is Cell adhesion molecule CEACAM21 of Homo sapiens (Human).